We begin with the raw amino-acid sequence, 507 residues long: Cytochrome P450 monooxygenase nodZ (507 aa).

2 helical membrane-spanning segments follow: residues 1-21 (MITA…FSLL) and 205-225 (GFLH…PWFL). An N-linked (GlcNAc...) asparagine glycan is attached at N352. C445 lines the heme pocket.

Belongs to the cytochrome P450 family. Heme serves as cofactor.

The protein resides in the membrane. It functions in the pathway secondary metabolite biosynthesis. Functionally, cytochrome P450 monooxygenase; part of the gene cluster that mediates the biosynthesis of the indole diterpenes nodulisporic acids (NA). Nodulisporic acid A (NAA) and its chemically modified derivatives are of particular significance because of their highly potent insecticidal activity against blood-feeding arthropods and lack of observable adverse effects on mammals, in particular the tremogenicity associated with the paspaline-derived IDTs is not observed. The geranylgeranyl diphosphate (GGPP) synthase ggs1, localized outside of the cluster, is proposed to catalyze the first step in nodulisporic acid biosynthesis via conversion of farnesyl pyrophosphate and isopentyl pyrophosphate into geranylgeranyl pyrophosphate (GGPP). Condensation of indole-3-glycerol phosphate with GGPP by the prenyl transferase nodC then forms 3-geranylgeranylindole (3-GGI). Epoxidation by the FAD-dependent monooxygenase nodM leads to a single-epoxidized-GGI that is substrate of the terpene cyclase nodB for cyclization to yield emindole SB. The terminal methyl carbon, C28, of emindole SB is then oxidized by the cytochrome P450 monooxygenase nodW to produce nodulisporic acid F (NAF), the pentacyclic core of NAA. NAF is converted to nodulisporic acid E (NAE) via prenylation. This step is probably performed by one of the indole diterpene prenyltransferases nodD1 or nodD2. Several oxidation steps performed by the FAD-linked oxidoreductase nodO and one of the cytochrome P450 monooxygenase nodR, nodX or nodZ further convert NAE to nodulisporic acid D (NAD). NAD is substrate of cytochrome P450 monooxygenase nodJ to produce the precursor of nodulisporic acid C (NAC), converted to NAC by one of the indole diterpene prenyltransferases nodD1 or nodD2. The FAD-dependent monooxygenase nodY2 then oxidizes NAC to nodulisporic acid B (NAB). Finally NAB is converted to NAA by one of the cytochrome P450 monooxygenases nodR, nodX or nodZ. The sequence is that of Cytochrome P450 monooxygenase nodZ from Hypoxylon pulicicidum.